A 397-amino-acid chain; its full sequence is Staphyloferrin A transporter (397 aa).

12 helical membrane-spanning segments follow: residues Phe10–Thr30, Ile39–Ala59, Leu67–Tyr87, Pro93–Val110, Phe137–Tyr157, Thr162–Phe182, Ile213–Val233, Ile245–Pro265, Ile271–Val292, Ile296–Ala313, Val333–Ile353, and Phe358–Phe378.

It belongs to the major facilitator superfamily.

It localises to the cell membrane. Functionally, involved in staphyloferrin A secretion. The sequence is that of Staphyloferrin A transporter from Staphylococcus aureus (strain NCTC 8325 / PS 47).